A 258-amino-acid polypeptide reads, in one-letter code: Chymotrypsin-like elastase family member 1 (258 aa).

The signal sequence occupies residues 1-8 (MLVLYGHS). Positions 9 to 18 (TQDLPETNAR) are cleaved as a propeptide — activation peptide. Residues 19–256 (VVGGTEAGRN…YISWINNVIA (238 aa)) enclose the Peptidase S1 domain. A disulfide bridge links Cys48 with Cys64. His63 acts as the Charge relay system in catalysis. Ca(2+) is bound by residues Asp77, Asn79, Gln82, and Glu87. Asn79 is a glycosylation site (N-linked (GlcNAc...) asparagine). Asp111 (charge relay system) is an active-site residue. Disulfide bonds link Cys145/Cys212, Cys176/Cys192, and Cys202/Cys232. Residue Ser206 is the Charge relay system of the active site. Residue Asn233 is glycosylated (N-linked (GlcNAc...) asparagine).

Belongs to the peptidase S1 family. Elastase subfamily. It depends on Ca(2+) as a cofactor. As to expression, basal layers of epidermis (at protein level). Not expressed in the pancreas.

Its subcellular location is the secreted. The catalysed reaction is Hydrolysis of proteins, including elastin. Preferential cleavage: Ala-|-Xaa.. Its function is as follows. Serine proteases that hydrolyze many proteins in addition to elastin. This chain is Chymotrypsin-like elastase family member 1 (CELA1), found in Homo sapiens (Human).